Reading from the N-terminus, the 214-residue chain is DELTA-actitoxin-Aeq1b (214 aa).

An N-terminal signal peptide occupies residues 1–19 (MSRLIIVFIVVTMICAATA). The propeptide occupies 20–35 (LSSKKSINEDEKDEKR). Positions 38–47 (AVAGAVIEGA) are plays an important role in the hemolytic activity. Positions 46–65 (GATLTFNVLQTVLKALGDIS) are N-terminal region. Positions 89, 122, 140, 142, 168, 172, and 173 each coordinate phosphocholine. The tract at residues 140-155 (SIPFDYNLYSNWWNVK) is trp-rich region, which is important for the binding to lipid membrane. Positions 179–181 (RGD) match the Cell attachment site, crucial for protein stability motif.

The protein belongs to the actinoporin family. Sea anemone subfamily. As to quaternary structure, octamer or nonamer in membranes. Monomer in the soluble state.

The protein resides in the secreted. It is found in the nematocyst. It localises to the target cell membrane. Functionally, pore-forming protein that forms cations-selective hydrophilic pores of around 1 nm and causes cytolysis. Pore formation is a multi-step process that involves specific recognition of membrane sphingomyelin (but neither cholesterol nor phosphatidylcholine) using aromatic rich region and adjacent phosphocholine (POC) binding site, firm binding to the membrane (mainly driven by hydrophobic interactions) accompanied by the transfer of the N-terminal region to the lipid-water interface and finally pore formation after oligomerization of monomers. This is DELTA-actitoxin-Aeq1b from Actinia equina (Beadlet anemone).